Here is a 490-residue protein sequence, read N- to C-terminus: Cytochrome P450 2C6 (490 aa).

K249 and K375 each carry N6-acetyllysine. C435 is a heme binding site.

This sequence belongs to the cytochrome P450 family. It depends on heme as a cofactor.

It is found in the endoplasmic reticulum membrane. The protein localises to the microsome membrane. The catalysed reaction is an organic molecule + reduced [NADPH--hemoprotein reductase] + O2 = an alcohol + oxidized [NADPH--hemoprotein reductase] + H2O + H(+). Functionally, cytochromes P450 are a group of heme-thiolate monooxygenases. In liver microsomes, this enzyme is involved in an NADPH-dependent electron transport pathway. It oxidizes a variety of structurally unrelated compounds, including steroids, fatty acids, and xenobiotics. The protein is Cytochrome P450 2C6 (Cyp2c6) of Rattus norvegicus (Rat).